The chain runs to 632 residues: Effector protein hopAD1 (632 aa).

Residues 13-34 (TAVDSSLPTSATSQTISNTKSR) form a disordered region. The segment covering 15 to 32 (VDSSLPTSATSQTISNTK) has biased composition (polar residues).

Its subcellular location is the secreted. This Pseudomonas syringae pv. tomato (strain ATCC BAA-871 / DC3000) protein is Effector protein hopAD1 (hopAD1).